The following is a 386-amino-acid chain: S-adenosylmethionine:tRNA ribosyltransferase-isomerase (386 aa).

This sequence belongs to the QueA family. In terms of assembly, monomer.

The protein localises to the cytoplasm. It carries out the reaction 7-aminomethyl-7-carbaguanosine(34) in tRNA + S-adenosyl-L-methionine = epoxyqueuosine(34) in tRNA + adenine + L-methionine + 2 H(+). It functions in the pathway tRNA modification; tRNA-queuosine biosynthesis. Its function is as follows. Transfers and isomerizes the ribose moiety from AdoMet to the 7-aminomethyl group of 7-deazaguanine (preQ1-tRNA) to give epoxyqueuosine (oQ-tRNA). This chain is S-adenosylmethionine:tRNA ribosyltransferase-isomerase, found in Rickettsia canadensis (strain McKiel).